The chain runs to 288 residues: Homoserine kinase (288 aa).

Proline 79 to serine 89 contacts ATP.

It belongs to the GHMP kinase family. Homoserine kinase subfamily.

It localises to the cytoplasm. The catalysed reaction is L-homoserine + ATP = O-phospho-L-homoserine + ADP + H(+). It functions in the pathway amino-acid biosynthesis; L-threonine biosynthesis; L-threonine from L-aspartate: step 4/5. Functionally, catalyzes the ATP-dependent phosphorylation of L-homoserine to L-homoserine phosphate. This is Homoserine kinase from Streptococcus sanguinis (strain SK36).